A 104-amino-acid chain; its full sequence is Large ribosomal subunit protein uL24 (104 aa).

The segment at 41–61 (ISKKHKKPTPNEKQSGGIFEK) is disordered.

It belongs to the universal ribosomal protein uL24 family. As to quaternary structure, part of the 50S ribosomal subunit.

One of two assembly initiator proteins, it binds directly to the 5'-end of the 23S rRNA, where it nucleates assembly of the 50S subunit. In terms of biological role, one of the proteins that surrounds the polypeptide exit tunnel on the outside of the subunit. In Wigglesworthia glossinidia brevipalpis, this protein is Large ribosomal subunit protein uL24.